The following is a 170-amino-acid chain: Adenine phosphoribosyltransferase (170 aa).

The protein belongs to the purine/pyrimidine phosphoribosyltransferase family. As to quaternary structure, homodimer.

Its subcellular location is the cytoplasm. The enzyme catalyses AMP + diphosphate = 5-phospho-alpha-D-ribose 1-diphosphate + adenine. It participates in purine metabolism; AMP biosynthesis via salvage pathway; AMP from adenine: step 1/1. Its function is as follows. Catalyzes a salvage reaction resulting in the formation of AMP, that is energically less costly than de novo synthesis. The polypeptide is Adenine phosphoribosyltransferase (Mycoplasmopsis agalactiae (strain NCTC 10123 / CIP 59.7 / PG2) (Mycoplasma agalactiae)).